The sequence spans 446 residues: Probable D-serine dehydratase (446 aa).

K116 is subject to N6-(pyridoxal phosphate)lysine.

It belongs to the serine/threonine dehydratase family. DsdA subfamily. Pyridoxal 5'-phosphate serves as cofactor.

It catalyses the reaction D-serine = pyruvate + NH4(+). The protein is Probable D-serine dehydratase of Bacillus cereus (strain ZK / E33L).